The primary structure comprises 40 residues: Photosystem II reaction center protein X (40 aa).

The chain crosses the membrane as a helical span at residues 10 to 30 (WSLVWGTVIVVIPVTVGLVFI).

It belongs to the PsbX family. Type 1 subfamily. In terms of assembly, PSII is composed of 1 copy each of membrane proteins PsbA, PsbB, PsbC, PsbD, PsbE, PsbF, PsbH, PsbI, PsbJ, PsbK, PsbL, PsbM, PsbT, PsbX, PsbY, PsbZ, Psb30/Ycf12, peripheral proteins PsbO, CyanoQ (PsbQ), PsbU, PsbV and a large number of cofactors. It forms dimeric complexes.

It localises to the cellular thylakoid membrane. In terms of biological role, involved in the binding and/or turnover of quinones at the Q(B) site of photosystem II (PSII). PSII is a light-driven water plastoquinone oxidoreductase, using light energy to abstract electrons from H(2)O, generating a proton gradient subsequently used for ATP formation. This chain is Photosystem II reaction center protein X, found in Crocosphaera subtropica (strain ATCC 51142 / BH68) (Cyanothece sp. (strain ATCC 51142)).